A 1112-amino-acid polypeptide reads, in one-letter code: Zinc finger protein 654 (1112 aa).

The tract at residues 482 to 514 (PSSSLKKRVDQQSVEEDQSTGETDPDDASVVQP) is disordered. The segment covering 494–508 (SVEEDQSTGETDPDD) has biased composition (acidic residues). 5 consecutive C2H2-type zinc fingers follow at residues 566 to 588 (FACVICGRKFRNRGLMQKHLKNH), 738 to 763 (FKCPALGCVRIFKRIGFLNMHARTVH), 779 to 801 (GKCKFCQRQFEDSQHFIDHLNRH), 807 to 831 (YFCLHFNCNESFKLPFQLAQHTKSH), and 836 to 860 (AQCSFPECHELFEDLPLLYEHEAQH). 2 disordered regions span residues 885–906 (FSNENQTIHHPVSTSKSRKYST) and 997–1018 (VESQEHSALSVSQAPSKPNLTS). Polar residues-rich tracts occupy residues 886 to 899 (SNENQTIHHPVSTS) and 1002 to 1018 (HSALSVSQAPSKPNLTS). Ser-1107 and Ser-1111 each carry phosphoserine.

The protein belongs to the krueppel C2H2-type zinc-finger protein family.

Its subcellular location is the nucleus. Its function is as follows. May be involved in transcriptional regulation. The chain is Zinc finger protein 654 from Mus musculus (Mouse).